Reading from the N-terminus, the 262-residue chain is Nodulation protein J (262 aa).

In terms of domain architecture, ABC transmembrane type-2 spans 33–259 (ASLLGNLADP…FASIALFRRR (227 aa)). Helical transmembrane passes span 37–57 (GNLA…GLIV), 64–84 (SYIA…SATF), 102–122 (GILF…VWAA), 125–145 (SVLA…ASWT), 149–169 (CAIP…MVVI), 177–197 (YFVF…GAVF), and 236–256 (LHVG…IALF).

This sequence belongs to the ABC-2 integral membrane protein family. Lipooligosaccharide exporter (TC 3.A.1.102) subfamily. In terms of assembly, the complex is composed of two ATP-binding proteins (NodI) and two transmembrane proteins (NodJ).

Its subcellular location is the cell inner membrane. In terms of biological role, part of the ABC transporter complex NodIJ involved in the export of the nodulation factors (Nod factors), the bacterial signal molecules that induce symbiosis and subsequent nodulation induction. Nod factors are LCO (lipo-chitin oligosaccharide), a modified beta-1,4-linked N-acetylglucosamine oligosaccharide. This subunit encodes the transporter. This is Nodulation protein J (nodJ) from Bradyrhizobium diazoefficiens (strain JCM 10833 / BCRC 13528 / IAM 13628 / NBRC 14792 / USDA 110).